Here is a 154-residue protein sequence, read N- to C-terminus: Endoribonuclease YbeY (154 aa).

Zn(2+) is bound by residues His-117, His-121, and His-127.

Belongs to the endoribonuclease YbeY family. Zn(2+) serves as cofactor.

The protein localises to the cytoplasm. Functionally, single strand-specific metallo-endoribonuclease involved in late-stage 70S ribosome quality control and in maturation of the 3' terminus of the 16S rRNA. This is Endoribonuclease YbeY from Polaromonas sp. (strain JS666 / ATCC BAA-500).